The primary structure comprises 1142 residues: Ribonucleoside-diphosphate reductase large subunit (1142 aa).

The interval 1–33 is disordered; sequence MANRPAASALAGARSPSERQEPREPEVAPPGGD. A compositionally biased stretch (basic and acidic residues) spans 16–26; that stretch reads PSERQEPREPE. Residues 55 to 75 carry the RIP homotypic interaction motif (RHIM) motif; it reads AYRISDSSFVQCGSNCSMIID. Residues 118-322 form a disordered region; sequence SGPSATTSVG…TDPGYPVPLE (205 aa). Positions 119 to 132 are enriched in polar residues; it reads GPSATTSVGTQTSG. Over residues 141 to 159 the composition is skewed to pro residues; it reads TPEPQGPQAVPPPPPPPFP. Basic and acidic residues predominate over residues 164 to 179; it reads CCARRDARGGAEKDVG. Residues 192 to 205 show a composition bias toward acidic residues; sequence SETEDSDSSDEDTG. Positions 277 to 303 are enriched in low complexity; the sequence is GSATDPRASADSDSAAHAAAPQADVAP. The interval 294–400 is alpha-crystallin domain; that stretch reads AAAPQADVAP…CLDLPPVPPN (107 aa). Substrate-binding positions include T571, 586 to 587, G617, 796 to 800, and 973 to 977; these read SC, NLCTE, and PTAAS. A disulfide bridge links C587 with C813. The active-site Proton acceptor is N796. C798 serves as the catalytic Cysteine radical intermediate. Residue E800 is the Proton acceptor of the active site.

Belongs to the ribonucleoside diphosphate reductase large chain family. In terms of assembly, heterotetramer composed of a homodimer of the large subunit (R1) and a homodimer of the small subunit (R2). Larger multisubunit protein complex are also active, composed of (R1)n(R2)n. May self-assemble (via RIP homotypic interaction motif/RHIM) into homomeric fibrillar amyloid structures. Interacts (via RHIM) with human RIPK1 (via RHIM). Interacts (via RHIM) with human RIPK3 (via RHIM). May interact (via RHIM) with human ZBP1 (via RHIM). Interacts (via C-terminus) with host CASP8.

The protein localises to the host cell membrane. Its subcellular location is the host endosome membrane. It catalyses the reaction a 2'-deoxyribonucleoside 5'-diphosphate + [thioredoxin]-disulfide + H2O = a ribonucleoside 5'-diphosphate + [thioredoxin]-dithiol. Its function is as follows. Ribonucleoside-diphosphate reductase holoenzyme that provides the precursors necessary for viral DNA synthesis. Allows virus growth in non-dividing cells, as well as reactivation from latency in infected hosts. Catalyzes the biosynthesis of deoxyribonucleotides from the corresponding ribonucleotides. The N-terminal region confers antiapoptotic activity in differentiated cells such as neurons and is important for viral reactivation to increase neural survivability. Prevents host necroptosis by targeting host RIPK1 and RIPK3, thereby hampering the formation of necroptotic RIPK1-RIPK3 complexes. May form hetero-amyloid structures with host proteins RIPK3 or ZBP1, thereby preventing RIPK3- and ZBP1-mediated necroptosis. In addition, inhibits extrinsic apoptosis by targeting host CASP8. In Homo sapiens (Human), this protein is Ribonucleoside-diphosphate reductase large subunit.